The primary structure comprises 789 residues: Disintegrin and metalloproteinase domain-containing protein 7 (789 aa).

Residues 1–25 (MFPTGIFLMSVLISQMQGRGIVGVE) form the signal peptide. A propeptide spanning residues 26–176 (GQELVHPKKL…NYSCEGLNFT (151 aa)) is cleaved from the precursor. Asparagine 84, asparagine 167, and asparagine 174 each carry an N-linked (GlcNAc...) asparagine glycan. Topologically, residues 177 to 668 (KKSTLIDAKI…WGEALNLTSV (492 aa)) are extracellular. A Peptidase M12B domain is found at 199–393 (KFIELFVVAD…QKPACILNNP (195 aa)). Intrachain disulfides connect cysteine 310–cysteine 388, cysteine 350–cysteine 372, cysteine 352–cysteine 357, and cysteine 459–cysteine 479. Positions 401 to 487 (YPFCGNKKVD…ECPKDESQAN (87 aa)) constitute a Disintegrin domain. Asparagine 583, asparagine 628, and asparagine 664 each carry an N-linked (GlcNAc...) asparagine glycan. The helical transmembrane segment at 669-689 (SIMVVVLVMVIIGVGLVILLI) threads the bilayer. Topologically, residues 690–789 (RYQKCIKMKQ…DSQSDCTRLG (100 aa)) are cytoplasmic. Residues 762 to 771 (DPRGIADPKQ) show a composition bias toward basic and acidic residues. The segment at 762–789 (DPRGIADPKQNDNMNLNLDSQSDCTRLG) is disordered. The span at 772–789 (NDNMNLNLDSQSDCTRLG) shows a compositional bias: polar residues.

As to quaternary structure, interacts with ITM2B in sperm; the interaction increases following capacitation. Interacts with HSPA5 and CANX. As to expression, expressed specifically in the caput region of the epididymis (at protein level).

The protein resides in the membrane. Required for normal male fertility via maintenance of epithelial cell morphology in the caput epididymis and subsequently correct epididymis lumen structure required for sperm development. Plays a role in sperm motility, flagella morphology and tyrosine phosphorylation during sperm capacitance. Plays a role in normal expression levels of HSPA5, ITM2B and ADAM2 in sperm both prior to and post-capacitation. This is a non catalytic metalloprotease-like protein. This chain is Disintegrin and metalloproteinase domain-containing protein 7, found in Rattus norvegicus (Rat).